A 64-amino-acid chain; its full sequence is Large ribosomal subunit protein bL35 (64 aa).

Positions 19-44 (TGKLKASRPGRRHKLTGKTPKRKRQL) are disordered. The segment covering 23 to 44 (KASRPGRRHKLTGKTPKRKRQL) has biased composition (basic residues).

This sequence belongs to the bacterial ribosomal protein bL35 family.

The polypeptide is Large ribosomal subunit protein bL35 (Protochlamydia amoebophila (strain UWE25)).